The sequence spans 402 residues: MLAKMSFMQNVKNIQEVEVSHKRVLIRVDFNVPLDENLNITDDTRIRESLPTIQYCIDNKAKDIILVSHLGRPKGVEEKLSLKPFLKRLERLLNHEVVFSQNIVQLKQALNENAPTRIFLLENIRFLRGEEENDENLAKDLASLCDVFVNDAFGTSHRKHASTYGTAKFAPIKVSGFLLKKEIDSFYQAFNHPLRPLLLIVGGAKVSSKLTLLKNILDLIDKLIIAGAMSNTFLKALGYDVQDSSVEDALINDALELLQSAKEKKVKVYLPIDAVTTDDILNPKHIKISPVQDIEPKHKIADIGPASLKLFSEVIESAPTILWNGPLGVHEKQEFARGTTFLAHKIADTYAFSLIGGGDTIDAINRAGEKDNMSFISTGGGASLELLEGKILPCFEVLDKRH.

Substrate-binding positions include 29 to 31 (DFN), arginine 45, 69 to 72 (HLGR), arginine 125, and arginine 158. ATP is bound by residues lysine 209, glutamate 331, and 357 to 360 (GGDT).

The protein belongs to the phosphoglycerate kinase family.

It is found in the cytoplasm. The catalysed reaction is (2R)-3-phosphoglycerate + ATP = (2R)-3-phospho-glyceroyl phosphate + ADP. The protein operates within carbohydrate degradation; glycolysis; pyruvate from D-glyceraldehyde 3-phosphate: step 2/5. This Helicobacter pylori (strain ATCC 700392 / 26695) (Campylobacter pylori) protein is Phosphoglycerate kinase (pgk).